We begin with the raw amino-acid sequence, 219 residues long: Uracil-DNA glycosylase (219 aa).

Aspartate 61 (proton acceptor) is an active-site residue.

It belongs to the uracil-DNA glycosylase (UDG) superfamily. UNG family.

The protein resides in the cytoplasm. It catalyses the reaction Hydrolyzes single-stranded DNA or mismatched double-stranded DNA and polynucleotides, releasing free uracil.. Excises uracil residues from the DNA which can arise as a result of misincorporation of dUMP residues by DNA polymerase or due to deamination of cytosine. The chain is Uracil-DNA glycosylase from Neisseria meningitidis serogroup A / serotype 4A (strain DSM 15465 / Z2491).